Reading from the N-terminus, the 276-residue chain is Diaminopimelate epimerase (276 aa).

Residues Asn11, Gln44, and Asn64 each coordinate substrate. Residue Cys73 is the Proton donor of the active site. Substrate is bound by residues 74-75, Asn159, Asn192, and 210-211; these read IN and ER. The Proton acceptor role is filled by Cys219. Substrate is bound at residue 220–221; it reads GS.

Belongs to the diaminopimelate epimerase family. In terms of assembly, homodimer.

It localises to the cytoplasm. The catalysed reaction is (2S,6S)-2,6-diaminopimelate = meso-2,6-diaminopimelate. Its pathway is amino-acid biosynthesis; L-lysine biosynthesis via DAP pathway; DL-2,6-diaminopimelate from LL-2,6-diaminopimelate: step 1/1. Functionally, catalyzes the stereoinversion of LL-2,6-diaminopimelate (L,L-DAP) to meso-diaminopimelate (meso-DAP), a precursor of L-lysine and an essential component of the bacterial peptidoglycan. The sequence is that of Diaminopimelate epimerase from Wigglesworthia glossinidia brevipalpis.